The sequence spans 176 residues: Translation initiation factor IF-3 (176 aa).

The protein belongs to the IF-3 family. In terms of assembly, monomer.

It is found in the cytoplasm. Its function is as follows. IF-3 binds to the 30S ribosomal subunit and shifts the equilibrium between 70S ribosomes and their 50S and 30S subunits in favor of the free subunits, thus enhancing the availability of 30S subunits on which protein synthesis initiation begins. The chain is Translation initiation factor IF-3 from Streptococcus equi subsp. zooepidemicus (strain H70).